Reading from the N-terminus, the 469-residue chain is Ribulose bisphosphate carboxylase large chain (469 aa).

Residues 1 to 2 (MS) constitute a propeptide that is removed on maturation. Proline 3 is modified (N-acetylproline). Lysine 14 carries the N6,N6,N6-trimethyllysine modification. The substrate site is built by asparagine 123 and threonine 173. Catalysis depends on lysine 175, which acts as the Proton acceptor. Substrate is bound at residue lysine 177. Mg(2+) is bound by residues lysine 201, aspartate 203, and glutamate 204. An N6-carboxylysine modification is found at lysine 201. Histidine 294 functions as the Proton acceptor in the catalytic mechanism. Substrate is bound by residues arginine 295, histidine 327, and serine 379.

It belongs to the RuBisCO large chain family. Type I subfamily. As to quaternary structure, heterohexadecamer of 8 large chains and 8 small chains; disulfide-linked. The disulfide link is formed within the large subunit homodimers. The cofactor is Mg(2+). In terms of processing, the disulfide bond which can form in the large chain dimeric partners within the hexadecamer appears to be associated with oxidative stress and protein turnover.

The protein localises to the plastid. It is found in the chloroplast. The catalysed reaction is 2 (2R)-3-phosphoglycerate + 2 H(+) = D-ribulose 1,5-bisphosphate + CO2 + H2O. It catalyses the reaction D-ribulose 1,5-bisphosphate + O2 = 2-phosphoglycolate + (2R)-3-phosphoglycerate + 2 H(+). Its function is as follows. RuBisCO catalyzes two reactions: the carboxylation of D-ribulose 1,5-bisphosphate, the primary event in carbon dioxide fixation, as well as the oxidative fragmentation of the pentose substrate in the photorespiration process. Both reactions occur simultaneously and in competition at the same active site. This is Ribulose bisphosphate carboxylase large chain from Brexia madagascariensis.